The following is a 237-amino-acid chain: MLSLRSLLPHLGLFLCLALHLSPSLSASDNGSCVVLDNIYTSDILEISTMANVSGGDVTYTVTVPVNDSVSAVILKAVKEDDSPVGTWSGTYEKCNDSSVYYNLTSQSQSVFQTNWTVPTSEDVTKVNLQVLIVVNRTASKSSVKMEQVQPSASTPIPESSETSQTINTTPTVNTAKTTAKDTANTTAVTTANTTANTTAVTTAKTTAKSLAIRTLGSPLAGALHILLVFLISKLLF.

A signal peptide spans 1–27; the sequence is MLSLRSLLPHLGLFLCLALHLSPSLSA. N-linked (GlcNAc...) asparagine glycosylation is found at Asn-30, Asn-67, Asn-103, and Asn-136. A compositionally biased stretch (polar residues) spans 145–162; it reads KMEQVQPSASTPIPESSE. Positions 145-170 are disordered; that stretch reads KMEQVQPSASTPIPESSETSQTINTT. Ser-218 is lipidated: GPI-anchor amidated serine. A propeptide spans 219-237 (removed in mature form); it reads PLAGALHILLVFLISKLLF.

Post-translationally, N-glycosylated. In terms of processing, GPI-anchored. Present in hair follicle cells and sebaceous gland of skin, ciliated epithelial cells of trachea and bronchial tube, striated portion of submandibular gland, distal convoluted tubule cells of kidney, ciliated epithelial cells of oviduct, medulla of adrenal gland and anterior lobe of pituitary gland. Expressed in keratinocytes of the hair follicle at the trichilemmal zone corresponding to the terminally differentiated outermost suprabasal outer root sheath (ORS), including that of the sebaceous gland duct (SGD) and the directly adjacent upper distal end of the companion layer (CL). Expression is similar in all hair follicle growth stages. Also detected during both the early and late anagen phases above the bulge of stem cells. Expressed at the leading edge of the epidermal wound. Not expressed in the interfollicular epidermis (IFE), inner root sheath (IRS) and hair fiber. Highly expressed in placenta. Detected in mammary and prostate epithelia and in the pancreas (at protein level).

The protein resides in the apical cell membrane. Functionally, modulates leading keratinocyte migration and cellular adhesion to matrix proteins during a wound-healing response and promotes wound repair. May play a role during trichilemmal differentiation of the hair follicle. The polypeptide is Placenta-expressed transcript 1 protein (Plet1) (Mus musculus (Mouse)).